The following is a 309-amino-acid chain: Cytidine deaminase (309 aa).

2 consecutive CMP/dCMP-type deaminase domains span residues 48–168 (DEDA…FGPR) and 200–309 (DDND…SLSL). 89–91 (NME) lines the substrate pocket. Residue His102 participates in Zn(2+) binding. Glu104 (proton donor) is an active-site residue. Zn(2+)-binding residues include Cys129 and Cys132.

It belongs to the cytidine and deoxycytidylate deaminase family. As to quaternary structure, homodimer. Zn(2+) serves as cofactor.

The enzyme catalyses cytidine + H2O + H(+) = uridine + NH4(+). It carries out the reaction 2'-deoxycytidine + H2O + H(+) = 2'-deoxyuridine + NH4(+). Its function is as follows. This enzyme scavenges exogenous and endogenous cytidine and 2'-deoxycytidine for UMP synthesis. The sequence is that of Cytidine deaminase from Sodalis glossinidius (strain morsitans).